A 460-amino-acid polypeptide reads, in one-letter code: V-type ATP synthase beta chain (460 aa).

It belongs to the ATPase alpha/beta chains family.

Functionally, produces ATP from ADP in the presence of a proton gradient across the membrane. The V-type beta chain is a regulatory subunit. This is V-type ATP synthase beta chain from Anaeromyxobacter sp. (strain Fw109-5).